The chain runs to 141 residues: Putative pre-16S rRNA nuclease (141 aa).

Belongs to the YqgF nuclease family.

Its subcellular location is the cytoplasm. Its function is as follows. Could be a nuclease involved in processing of the 5'-end of pre-16S rRNA. This is Putative pre-16S rRNA nuclease from Natranaerobius thermophilus (strain ATCC BAA-1301 / DSM 18059 / JW/NM-WN-LF).